Here is an 866-residue protein sequence, read N- to C-terminus: Coiled-coil domain-containing protein 178 (866 aa).

Residues 1-21 (MPENEKEPAQPTTNEDALDTG) are disordered. Coiled coils occupy residues 157–266 (ELKK…DYMA), 292–403 (EVME…DQYC), 439–480 (KDLT…EEEV), 514–539 (KTEE…LKKL), 570–631 (RRQV…LLKK), and 665–705 (EKCI…REHV).

The protein is Coiled-coil domain-containing protein 178 (Ccdc178) of Mus musculus (Mouse).